The following is a 174-amino-acid chain: RNA pyrophosphohydrolase (174 aa).

Residues 6-149 (GFRANVGIII…KRDVYRKVMK (144 aa)) enclose the Nudix hydrolase domain. The Nudix box motif lies at 38–59 (GGVDDGESAEEAMYRELYEEVG).

Belongs to the Nudix hydrolase family. RppH subfamily. A divalent metal cation serves as cofactor.

Its function is as follows. Accelerates the degradation of transcripts by removing pyrophosphate from the 5'-end of triphosphorylated RNA, leading to a more labile monophosphorylated state that can stimulate subsequent ribonuclease cleavage. This Shewanella sp. (strain W3-18-1) protein is RNA pyrophosphohydrolase.